Consider the following 749-residue polypeptide: MTIKPAVRISDGNLIIKNRTILTGVPDNVITTSASEAGPVEGVFVGAVFNKEESKHIVPIGTLRNSRFMSCFRFKLWWMAQRMGEMGRDIPYETQFLLVESNDGSHLESDGANGVECNQKVYTVFLPLIEGSFRSCLQGNVNDEVELCLESGDVDTKRSSFTHSLYIHAGTDPFQTITDAIRTVKLHLNSFRQRHEKKLPGIVDYFGWCTWDAFYQEVTQEGVEAGLKSLAAGGTPPKFVIIDDGWQSVERDATVEAGDEKKESPIFRLTGIKENEKFKKKDDPNVGIKNIVKIAKEKHGLKYVYVWHAITGYWGGVRPGEEYGSVMKYPNMSKGVVENDPTWKTDVMTLQGLGLVSPKKVYKFYNELHSYLADAGVDGVKVDVQCVLETLGGGLGGRVELTRQFHQALDSSVAKNFPDNGCIACMSHNTDALYCSKQAAVIRASDDFYPRDPVSHTIHIASVAYNSVFLGEFMQPDWDMFHSVHPAAEYHASARAISGGPLYVSDSPGKHNFELLRKLVLPDGSILRARLPGRPTRDCLFADPARDGVSLLKIWNMNKYTGVLGVYNCQGAAWSSTERKNIFHQTKTDSLTGSIRGRDVHSISEASTDPTTWNGDCAVYSQSRGELIVMPYNVSLPVSLKIREHEIFTVSPISHLVDGVSFAPIGLVNMYNSGGAIEGLRYEAEKMKVVMEVKGCGKFGSYSSVKPKRCVVESNEIAFEYDSSSGLVTFELDKMPIENKRFHLIQVEL.

Belongs to the glycosyl hydrolases 36 family.

The enzyme catalyses alpha-D-galactosyl-(1-&gt;3)-1D-myo-inositol + sucrose = raffinose + myo-inositol. In terms of biological role, transglycosidase operating by a ping-pong reaction mechanism. Involved in the synthesis of raffinose, a major soluble carbohydrate in seeds, roots and tubers. This Arabidopsis thaliana (Mouse-ear cress) protein is Probable galactinol--sucrose galactosyltransferase 6 (RFS6).